A 160-amino-acid polypeptide reads, in one-letter code: Large ribosomal subunit protein uL16 (160 aa).

This sequence belongs to the universal ribosomal protein uL16 family. Part of the 50S ribosomal subunit.

Its function is as follows. Binds 23S rRNA and is also seen to make contacts with the A and possibly P site tRNAs. This is Large ribosomal subunit protein uL16 from Prochlorococcus marinus (strain MIT 9301).